Here is a 508-residue protein sequence, read N- to C-terminus: Steroid 17-alpha-hydroxylase/17,20 lyase (508 aa).

Asn-202 is a substrate binding site. Cys-442 is a heme binding site.

It belongs to the cytochrome P450 family. Heme serves as cofactor.

It is found in the endoplasmic reticulum membrane. The protein localises to the microsome membrane. It carries out the reaction a C21-steroid + reduced [NADPH--hemoprotein reductase] + O2 = a 17alpha-hydroxy-C21-steroid + oxidized [NADPH--hemoprotein reductase] + H2O + H(+). It catalyses the reaction progesterone + reduced [NADPH--hemoprotein reductase] + O2 = 17alpha-hydroxyprogesterone + oxidized [NADPH--hemoprotein reductase] + H2O + H(+). The enzyme catalyses pregnenolone + reduced [NADPH--hemoprotein reductase] + O2 = 17alpha-hydroxypregnenolone + oxidized [NADPH--hemoprotein reductase] + H2O + H(+). The catalysed reaction is 17alpha-hydroxypregnenolone + reduced [NADPH--hemoprotein reductase] + O2 = 3beta-hydroxyandrost-5-en-17-one + acetate + oxidized [NADPH--hemoprotein reductase] + H2O + 2 H(+). It participates in steroid hormone biosynthesis. Its pathway is steroid biosynthesis; glucocorticoid biosynthesis. With respect to regulation, regulated predominantly by intracellular cAMP levels. The 17,20-lyase activity is stimulated by cytochrome b5, which acts as an allosteric effector increasing the Vmax of the lyase activity. Its function is as follows. A cytochrome P450 monooxygenase involved in corticoid and androgen biosynthesis. Catalyzes 17-alpha hydroxylation of C21 steroids, which is common for both pathways. A second oxidative step, required only for androgen synthesis, involves an acyl-carbon cleavage. Hydroxylates pregnenolone to form 17-alpha pregnenolone, followed by the cleavage of the C17-C20 bond to form dehydroepiandrosterone (DHEA). Has 17-alpha hydroxylase activity toward progesterone. The 17-alpha hydroxy intermediates, as part of adrenal glucocorticoids biosynthesis pathway, are precursors of cortisol. Mechanistically, uses molecular oxygen inserting one oxygen atom into a substrate, and reducing the second into a water molecule, with two electrons provided by NADPH via cytochrome P450 reductase (CPR; NADPH-ferrihemoprotein reductase). This is Steroid 17-alpha-hydroxylase/17,20 lyase (CYP17A1) from Papio hamadryas ursinus (Chacma baboon).